We begin with the raw amino-acid sequence, 555 residues long: La-related protein 7 (555 aa).

An HTH La-type RNA-binding domain is found at 36-127 (RSRVKQLLSD…RRKEPLGETP (92 aa)). Positions 133-211 (RTVYVELLPK…PRKPGIFPKT (79 aa)) constitute an RRM domain. The interval 218–327 (PFDAVTQDND…ENKDEELNSL (110 aa)) is disordered. Polar residues-rich tracts occupy residues 238 to 251 (KNSTSEETGSNNMD), 258 to 274 (STVTSEPNLATLTSTVS), and 284 to 293 (SQSFEASSGE). A coiled-coil region spans residues 295 to 356 (QFEMSSKMRK…ERLKVGEEVI (62 aa)). The span at 303–327 (RKVEEEKSELKDLSSENKDEELNSL) shows a compositional bias: basic and acidic residues. One can recognise a xRRM domain in the interval 425–538 (EFLSGVIVKI…TEKLISKAEK (114 aa)).

It belongs to the LARP7 family. In terms of assembly, core component of the 7SK RNP complex. Associates with box C/D small nucleolar ribonucleoprotein (snoRNP) complexes.

The protein resides in the nucleus. Its subcellular location is the nucleoplasm. In terms of biological role, RNA-binding protein that specifically binds distinct small nuclear RNA (snRNAs) and regulates their processing and function. Specifically binds the 7SK snRNA (7SK RNA) and acts as a core component of the 7SK ribonucleoprotein (RNP) complex, thereby acting as a negative regulator of transcription elongation by RNA polymerase II. The 7SK RNP complex sequesters the positive transcription elongation factor b (P-TEFb) in a large inactive 7SK RNP complex preventing RNA polymerase II phosphorylation and subsequent transcriptional elongation. The 7SK RNP complex also promotes snRNA gene transcription by RNA polymerase II via interaction with the little elongation complex (LEC). LARP7 specifically binds to the highly conserved 3'-terminal U-rich stretch of 7SK RNA; on stimulation, remains associated with 7SK RNA, whereas P-TEFb is released from the complex. LARP7 also acts as a regulator of mRNA splicing fidelity by promoting U6 snRNA processing. Specifically binds U6 snRNAs and associates with a subset of box C/D RNP complexes: promotes U6 snRNA 2'-O-methylation by facilitating U6 snRNA loading into box C/D RNP complexes. U6 snRNA 2'-O-methylation is required for mRNA splicing fidelity. This is La-related protein 7 from Danio rerio (Zebrafish).